Consider the following 576-residue polypeptide: Beta-bisabolene synthase (576 aa).

(2E,6E)-farnesyl diphosphate contacts are provided by Arg286, Asp323, Asp327, Arg466, and Asn469. Mg(2+) is bound by residues Asp323 and Asp327. Positions 323-327 (DDVYD) match the DDXXD motif motif. 3 residues coordinate Mg(2+): Asn469, Thr473, and Glu477.

Belongs to the terpene synthase family. Tpsb subfamily. The cofactor is Mg(2+). Mn(2+) serves as cofactor.

Functionally, produces almost exclusively beta-bisabolene and only traces of alpha-bisabolol from (2E,6E)-farnesyl diphosphate in fragrance biosynthesis. The sequence is that of Beta-bisabolene synthase from Santalum austrocaledonicum (Sandalwood).